The primary structure comprises 206 residues: Protein tyrosine phosphatase receptor type C-associated protein (206 aa).

Residues Val34–Trp54 form a helical membrane-spanning segment. The interval Gly98–Ala173 is disordered. Phosphoserine is present on residues Ser99 and Ser153. A compositionally biased stretch (low complexity) spans Leu161–Ala173.

As to quaternary structure, interacts with CD45/PTPRC. In terms of processing, phosphorylated on tyrosine residues.

The protein localises to the membrane. The protein is Protein tyrosine phosphatase receptor type C-associated protein (PTPRCAP) of Homo sapiens (Human).